The sequence spans 693 residues: Elongation factor G (693 aa).

Residues 8–282 form the tr-type G domain; sequence KNTRNIGIMA…AAIEYLPSPL (275 aa). GTP-binding positions include 17 to 24, 81 to 85, and 135 to 138; these read AHIDAGKT, DTPGH, and NKMD.

Belongs to the TRAFAC class translation factor GTPase superfamily. Classic translation factor GTPase family. EF-G/EF-2 subfamily.

It is found in the cytoplasm. Functionally, catalyzes the GTP-dependent ribosomal translocation step during translation elongation. During this step, the ribosome changes from the pre-translocational (PRE) to the post-translocational (POST) state as the newly formed A-site-bound peptidyl-tRNA and P-site-bound deacylated tRNA move to the P and E sites, respectively. Catalyzes the coordinated movement of the two tRNA molecules, the mRNA and conformational changes in the ribosome. This is Elongation factor G from Macrococcus caseolyticus (strain JCSC5402) (Macrococcoides caseolyticum).